A 450-amino-acid chain; its full sequence is IMP-specific 5'-nucleotidase 1 (450 aa).

Position 144 (His144) interacts with ATP. The active-site Nucleophile is Asp172. Positions 172, 174, 180, 208, 376, and 384 each coordinate IMP. Asp172 and Asp174 together coordinate Mg(2+). The active-site Proton donor is Asp174. Asp411 lines the Mg(2+) pocket.

This sequence belongs to the ISN1 family. Homotetramer. Mg(2+) serves as cofactor.

The enzyme catalyses IMP + H2O = inosine + phosphate. Its activity is regulated as follows. Allosterically activated by ATP. ATP binding is a prerequisite to magnesium and substrate binding. ATP binds to 2 of the subunits in the homotetramer inducing a closure of these 2 subunits and the release of the C-terminal loop, thereby activating the enzyme. In terms of biological role, IMP-specific 5'-nucleotidase involved in IMP (inosine 5'-phosphate) degradation. This is IMP-specific 5'-nucleotidase 1 (ISN1) from Saccharomyces cerevisiae (strain ATCC 204508 / S288c) (Baker's yeast).